A 234-amino-acid chain; its full sequence is t-SNARE protein aex-4 (234 aa).

2 t-SNARE coiled-coil homology domains span residues 37 to 99 and 170 to 232; these read AKLN…ITAM and DAIE…VKKL.

It belongs to the SNAP-25 family. In terms of tissue distribution, expressed in intestinal cells.

It is found in the cell membrane. Functionally, t-SNARE protein which regulates the secretion of aex-5 from intestinal cells. Involved in the defecation motor program, which is a coordinated series of three muscle contractions that occurs every 45 seconds. This chain is t-SNARE protein aex-4, found in Caenorhabditis elegans.